The chain runs to 511 residues: GMP synthase [glutamine-hydrolyzing] (511 aa).

In terms of domain architecture, Glutamine amidotransferase type-1 spans 5 to 195; it reads DIIVLDFGSQ…AKYICDCEST (191 aa). Cysteine 82 serves as the catalytic Nucleophile. Catalysis depends on residues histidine 169 and glutamate 171. The GMPS ATP-PPase domain maps to 196-386; it reads WNMGNFAKIK…LGLSPDLVYR (191 aa). ATP is bound at residue 223–229; it reads SGGVDSS.

As to quaternary structure, homodimer.

It carries out the reaction XMP + L-glutamine + ATP + H2O = GMP + L-glutamate + AMP + diphosphate + 2 H(+). It functions in the pathway purine metabolism; GMP biosynthesis; GMP from XMP (L-Gln route): step 1/1. Catalyzes the synthesis of GMP from XMP. The chain is GMP synthase [glutamine-hydrolyzing] from Campylobacter hominis (strain ATCC BAA-381 / DSM 21671 / CCUG 45161 / LMG 19568 / NCTC 13146 / CH001A).